The following is a 392-amino-acid chain: F-box only protein 5-A (392 aa).

Residues 1–21 form a disordered region; that stretch reads MMCGFASNQSPKKLSSKKSSA. Low complexity predominate over residues 7–20; that stretch reads SNQSPKKLSSKKSS. The region spanning 197–244 is the F-box domain; that stretch reads AELFHRDFKHLLTKILRHLSAMDLINVISVSTTWRKLLQKDNWAYNAY. A ZBR-type zinc finger spans residues 319-367; that stretch reads SLKVCVDCGSPAKHDPCLHRAICTRESCKLDFCTRCSCKYHFSKSCLMS. Positions 323, 326, 341, 346, 351, 354, 359, and 364 each coordinate Zn(2+).

In terms of assembly, part of a SCF (SKP1-cullin-F-box) protein ligase complex. Interacts with btrc. Interacts with skp1. Interacts with cdc20. Interacts with pin1; stabilizes fbxo5 by preventing its association with btrc in an isomerization-dependent pathway; this interaction is present during G2 phase and prevents fbxo5 degradation. Interacts with plk1. In terms of processing, proteolysed; proteolysis is induced by both cyclin B-cdk1 and cyclin A-cdk1/2 complex through probable phosphorylation. Proteolysis is inhibited by pin1 during G2.

It localises to the nucleus. The protein localises to the cytoplasm. It is found in the cytoskeleton. The protein resides in the spindle. Its subcellular location is the microtubule organizing center. It localises to the centrosome. Its pathway is protein modification; protein ubiquitination. In terms of biological role, regulates progression through early mitosis by inhibiting the anaphase promoting complex/cyclosome (APC). Binds to the APC activator cdc20 to prevent APC activation. Can also bind directly to the APC to inhibit substrate-binding. Required to arrest unfertilized eggs at metaphase of meiosis II, by preventing their release from metaphase of meiosis II, through inhibition of APC-dependent cyclin B destruction leading to stabilization of cyclin B-cdk1 complex activity. This chain is F-box only protein 5-A (fbxo5-a), found in Xenopus laevis (African clawed frog).